Here is a 464-residue protein sequence, read N- to C-terminus: Bifunctional protein GlmU (464 aa).

A pyrophosphorylase region spans residues 1–231 (MDVVIMAAGK…ATQVAGVNSP (231 aa)). UDP-N-acetyl-alpha-D-glucosamine-binding positions include lysine 20, glutamine 78, 83–84 (GT), 105–107 (SGD), glycine 142, glutamate 156, and asparagine 229. Aspartate 107 serves as a coordination point for Mg(2+). Asparagine 229 lines the Mg(2+) pocket. Residues 232–252 (VQLAALERAFQSKVALQLMEQ) form a linker region. The segment at 253–464 (GVRLADPARL…SIANWKRPSK (212 aa)) is N-acetyltransferase. Residues arginine 343 and lysine 361 each coordinate UDP-N-acetyl-alpha-D-glucosamine. The Proton acceptor role is filled by histidine 373. Residues tyrosine 376 and asparagine 387 each coordinate UDP-N-acetyl-alpha-D-glucosamine. Acetyl-CoA is bound by residues alanine 390, 396–397 (NY), serine 415, glycine 433, and arginine 450.

In the N-terminal section; belongs to the N-acetylglucosamine-1-phosphate uridyltransferase family. It in the C-terminal section; belongs to the transferase hexapeptide repeat family. Homotrimer. The cofactor is Mg(2+).

The protein resides in the cytoplasm. It catalyses the reaction alpha-D-glucosamine 1-phosphate + acetyl-CoA = N-acetyl-alpha-D-glucosamine 1-phosphate + CoA + H(+). It carries out the reaction N-acetyl-alpha-D-glucosamine 1-phosphate + UTP + H(+) = UDP-N-acetyl-alpha-D-glucosamine + diphosphate. The protein operates within nucleotide-sugar biosynthesis; UDP-N-acetyl-alpha-D-glucosamine biosynthesis; N-acetyl-alpha-D-glucosamine 1-phosphate from alpha-D-glucosamine 6-phosphate (route II): step 2/2. Its pathway is nucleotide-sugar biosynthesis; UDP-N-acetyl-alpha-D-glucosamine biosynthesis; UDP-N-acetyl-alpha-D-glucosamine from N-acetyl-alpha-D-glucosamine 1-phosphate: step 1/1. It functions in the pathway bacterial outer membrane biogenesis; LPS lipid A biosynthesis. Its function is as follows. Catalyzes the last two sequential reactions in the de novo biosynthetic pathway for UDP-N-acetylglucosamine (UDP-GlcNAc). The C-terminal domain catalyzes the transfer of acetyl group from acetyl coenzyme A to glucosamine-1-phosphate (GlcN-1-P) to produce N-acetylglucosamine-1-phosphate (GlcNAc-1-P), which is converted into UDP-GlcNAc by the transfer of uridine 5-monophosphate (from uridine 5-triphosphate), a reaction catalyzed by the N-terminal domain. This chain is Bifunctional protein GlmU, found in Albidiferax ferrireducens (strain ATCC BAA-621 / DSM 15236 / T118) (Rhodoferax ferrireducens).